Reading from the N-terminus, the 466-residue chain is 3-isopropylmalate dehydratase large subunit (466 aa).

[4Fe-4S] cluster-binding residues include C347, C407, and C410.

Belongs to the aconitase/IPM isomerase family. LeuC type 1 subfamily. Heterodimer of LeuC and LeuD. [4Fe-4S] cluster is required as a cofactor.

It carries out the reaction (2R,3S)-3-isopropylmalate = (2S)-2-isopropylmalate. Its pathway is amino-acid biosynthesis; L-leucine biosynthesis; L-leucine from 3-methyl-2-oxobutanoate: step 2/4. Functionally, catalyzes the isomerization between 2-isopropylmalate and 3-isopropylmalate, via the formation of 2-isopropylmaleate. This is 3-isopropylmalate dehydratase large subunit from Shigella flexneri.